Here is a 213-residue protein sequence, read N- to C-terminus: Dimethylamine corrinoid protein (213 aa).

The B12-binding N-terminal domain occupies 1 to 90; that stretch reads MSKEELLQEL…LMPEGASGSK (90 aa). Residues 91–213 form the B12-binding domain; sequence LGVIVNGTVE…AVAKAKELLA (123 aa). A methylcob(III)alamin-binding site is contributed by histidine 104.

The protein belongs to the methylamine corrinoid protein family. In terms of assembly, copurifies with MtbA.

It participates in one-carbon metabolism; methanogenesis from dimethylamine. Functionally, acts as a methyl group carrier between MtbB1 and MtbA. Binds 1 corrinoid cofactor per protein, is subsequently demethylated by MtbA. The protein is Dimethylamine corrinoid protein of Methanosarcina barkeri.